The chain runs to 256 residues: ATP-dependent dethiobiotin synthetase BioD (256 aa).

13 to 18 (EVGKTY) is a binding site for ATP. Position 17 (Thr-17) interacts with Mg(2+). Residue Lys-38 is part of the active site. Ser-42 lines the substrate pocket. Residues Asp-56, 118 to 121 (EGAG), and 187 to 188 (NR) each bind ATP. Residues Asp-56 and Glu-118 each coordinate Mg(2+).

This sequence belongs to the dethiobiotin synthetase family. In terms of assembly, homodimer. Mg(2+) serves as cofactor.

The protein resides in the cytoplasm. The enzyme catalyses (7R,8S)-7,8-diammoniononanoate + CO2 + ATP = (4R,5S)-dethiobiotin + ADP + phosphate + 3 H(+). It functions in the pathway cofactor biosynthesis; biotin biosynthesis; biotin from 7,8-diaminononanoate: step 1/2. Functionally, catalyzes a mechanistically unusual reaction, the ATP-dependent insertion of CO2 between the N7 and N8 nitrogen atoms of 7,8-diaminopelargonic acid (DAPA, also called 7,8-diammoniononanoate) to form a ureido ring. The protein is ATP-dependent dethiobiotin synthetase BioD of Rhodopirellula baltica (strain DSM 10527 / NCIMB 13988 / SH1).